The following is a 378-amino-acid chain: Erythronate-4-phosphate dehydrogenase (378 aa).

Residues serine 45 and threonine 66 each contribute to the substrate site. Residues aspartate 146 and threonine 175 each coordinate NAD(+). Arginine 208 is a catalytic residue. NAD(+) is bound at residue aspartate 232. Glutamate 237 is an active-site residue. The active-site Proton donor is histidine 254. Residue glycine 257 participates in NAD(+) binding. Tyrosine 258 lines the substrate pocket.

Belongs to the D-isomer specific 2-hydroxyacid dehydrogenase family. PdxB subfamily. As to quaternary structure, homodimer.

Its subcellular location is the cytoplasm. It catalyses the reaction 4-phospho-D-erythronate + NAD(+) = (R)-3-hydroxy-2-oxo-4-phosphooxybutanoate + NADH + H(+). The protein operates within cofactor biosynthesis; pyridoxine 5'-phosphate biosynthesis; pyridoxine 5'-phosphate from D-erythrose 4-phosphate: step 2/5. Its function is as follows. Catalyzes the oxidation of erythronate-4-phosphate to 3-hydroxy-2-oxo-4-phosphonooxybutanoate. The polypeptide is Erythronate-4-phosphate dehydrogenase (Salmonella paratyphi A (strain ATCC 9150 / SARB42)).